The sequence spans 225 residues: Cytidylate kinase (225 aa).

10–18 contributes to the ATP binding site; sequence GPASSGKST.

The protein belongs to the cytidylate kinase family. Type 1 subfamily.

Its subcellular location is the cytoplasm. It carries out the reaction CMP + ATP = CDP + ADP. It catalyses the reaction dCMP + ATP = dCDP + ADP. The polypeptide is Cytidylate kinase (Streptococcus gordonii (strain Challis / ATCC 35105 / BCRC 15272 / CH1 / DL1 / V288)).